Reading from the N-terminus, the 1998-residue chain is Histone acetyltransferase KAT6A (1998 aa).

The region spanning 1 to 77 is the SAMD1-like winged helix (WH) domain; the sequence is MVKLANPLYT…LNSYKDPDNP (77 aa). Residues 1–144 form a required for activation of RUNX1-1 region; that stretch reads MVKLANPLYT…CGGTAASGFH (144 aa). Residues 52–166 are required for nuclear localization; the sequence is ELSVKDGTIL…HGRLLKDGPL (115 aa). The disordered stretch occupies residues 72–93; sequence KDPDNPGRIALPKPRNHGKLDN. One can recognise an H15 domain in the interval 95 to 171; it reads QSVDWNKLLK…KDGPLYRLNT (77 aa). The interval 144–662 is interaction with PML; sequence HQQLRLAIKR…RKGYGRFLID (519 aa). K172 bears the N6-acetyllysine mark. 2 consecutive PHD-type zinc fingers follow at residues 199–258 and 255–306; these read DKPV…LRWQ and LRWQ…GMWI. The interval 312–662 is interaction with RUNX1-1; the sequence is PRKKGRKLLQ…RKGYGRFLID (351 aa). The interval 336-377 is disordered; sequence GRPKNRLKKQSTVSKGPFSKVRTGPGRGRKRKITVSSQSASS. Residues K350 and K355 each carry the N6-acetyllysine modification. The residue at position 369 (T369) is a Phosphothreonine; by PKB/AKT1. S419 is modified (phosphoserine). The disordered stretch occupies residues 440-464; sequence KGNRKSSTSHWPTDNQDGWESKQES. Polar residues predominate over residues 444–457; that stretch reads KSSTSHWPTDNQDG. Residue S471 is modified to Phosphoserine. The segment at 486–776 is catalytic; that stretch reads IQEQALQKVG…VDPECLRWTP (291 aa). Residues 502–776 enclose the MYST-type HAT domain; the sequence is PQVRCPSVIE…VDPECLRWTP (275 aa). The segment at 505–808 is mediates interaction with BRPF1, required for histone H3 acetyltransferase activity; that stretch reads RCPSVIEFGK…EPQGQERELE (304 aa). Residues 535–560 form a C2HC MYST-type zinc finger; sequence LYLCEFCLKYMKSRTILQQHMKKCGW. An N6-acetyllysine; by autocatalysis modification is found at K602. Acetyl-CoA contacts are provided by residues 643–647 and 652–658; these read SCIMI and QRKGYGR. E678 acts as the Proton donor/acceptor in catalysis. Residue S682 coordinates acetyl-CoA. Residues 783–947 are disordered; that stretch reads VVSEEEDEEA…RFSESADLWR (165 aa). S785 carries the phosphoserine modification. A compositionally biased stretch (acidic residues) spans 785–797; the sequence is SEEEDEEADDGEK. The segment covering 798-840 has biased composition (basic and acidic residues); sequence EEPQGQERELETRERVGKSVSRENKDQDSSSLIESEKKPEVKE. An N6-acetyllysine modification is found at K815. K835 is covalently cross-linked (Glycyl lysine isopeptide (Lys-Gly) (interchain with G-Cter in SUMO2)). The segment covering 865–874 has biased composition (basic residues); that stretch reads RRGRCGRKNR. Residues 875–886 are compositionally biased toward basic and acidic residues; sequence KTQERFGDKDSK. Phosphotyrosine is present on Y900. Positions 903 to 916 are enriched in basic and acidic residues; sequence CEEKSAASRERYTE. Phosphoserine is present on residues S940 and S953. Residues 982–1079 form a disordered region; sequence GFSESSEEEE…EEEEDENELF (98 aa). K1006 is modified (N6-acetyllysine). The span at 1008–1029 shows a compositional bias: basic residues; that stretch reads TLKRKKPILHRRRRVRKRKHHN. Residues 1030–1041 are compositionally biased toward low complexity; it reads SSVVTETISETT. Acidic residues-rich tracts occupy residues 1042–1052 and 1064–1077; these read EVLDEPFEDSD and FEIE…DENE. A phosphoserine mark is found at S1088, S1089, and S1114. Disordered stretches follow at residues 1096-1175, 1195-1436, 1450-1567, and 1630-1702; these read QASS…PGFK, PIKP…EGAY, QSYT…STMG, and TCVV…CSMN. Residues 1106–1119 show a composition bias toward acidic residues; that stretch reads DEEEEEEESDDADD. Positions 1135-1146 are enriched in polar residues; sequence NSASLEPDTSTP. A compositionally biased stretch (basic residues) spans 1147-1173; that stretch reads MKKKKGWPKGKSRKPIHWKKRPGRKPG. A compositionally biased stretch (basic and acidic residues) spans 1203-1228; it reads RTQESEELVEVKEGLVEERKEEMHTE. Acidic residues-rich tracts occupy residues 1229-1240 and 1281-1298; these read ADEEAEEEEDAA and EEPQ…DEVT. Basic and acidic residues-rich tracts occupy residues 1316 to 1333, 1351 to 1360, and 1392 to 1413; these read HLDS…ARED, DSRENAKDKD, and DSNT…HSEL. The segment covering 1472-1496 has biased composition (low complexity); sequence HNSPISSIPSHPSQSVRSVSSPSMP. The segment covering 1501-1522 has biased composition (polar residues); the sequence is GYTQISPEQGSLSAPSMQNMET. Positions 1510–1635 are interaction with RUNX1-2; it reads GSLSAPSMQN…KSPQTCVVER (126 aa). The tract at residues 1510–1735 is interaction with PML; sequence GSLSAPSMQN…YERIPGDFGA (226 aa). Positions 1527–1541 are enriched in low complexity; sequence DVPSVSDHSQQVVDS. The segment covering 1549-1567 has biased composition (polar residues); that stretch reads IESTTENYENPSSYDSTMG. 2 stretches are compositionally biased toward pro residues: residues 1639 to 1658 and 1665 to 1693; these read NQQP…PQPQ and PQPP…PQQQ. A required for activation of RUNX1-2 region spans residues 1907–1942; sequence SMNMNTLNAMNSYRMTQPMMNSSYHSNPAYMNQTAQ.

Belongs to the MYST (SAS/MOZ) family. In terms of assembly, component of the MOZ/MORF complex composed at least of ING5, KAT6A, KAT6B, MEAF6 and one of BRPF1, BRD1/BRPF2 and BRPF3. Interacts with RUNX1; phosphorylation of RUNX1 enhances the interaction. Interacts with RUNX2. Interacts with p53/TP53. Interacts with PML and this interaction positively regulates its acetylation activity towards p53/TP53. Autoacetylated. Autoacetylation at Lys-602 is required for proper function. Post-translationally, phosphorylation at Thr-369 by PKB/AKT1 inhibits its interaction with PML and negatively regulates its acetylation activity towards p53/TP53.

It localises to the nucleus. The protein localises to the nucleolus. The protein resides in the nucleoplasm. It is found in the PML body. It carries out the reaction L-lysyl-[protein] + acetyl-CoA = N(6)-acetyl-L-lysyl-[protein] + CoA + H(+). Functionally, histone acetyltransferase that acetylates lysine residues in histone H3 and histone H4 (in vitro). Component of the MOZ/MORF complex which has a histone H3 acetyltransferase activity. May act as a transcriptional coactivator for RUNX1 and RUNX2. Acetylates p53/TP53 at 'Lys-120' and 'Lys-382' and controls its transcriptional activity via association with PML. In Rattus norvegicus (Rat), this protein is Histone acetyltransferase KAT6A (Kat6a).